Here is a 501-residue protein sequence, read N- to C-terminus: 1-aminocyclopropane-1-carboxylate synthase-like protein 1 (501 aa).

Glu-105 lines the substrate pocket. At Lys-323 the chain carries N6-(pyridoxal phosphate)lysine. A disordered region spans residues 480–501 (GKSQVAEDPRPSQSQEPSDQRR). Positions 490–501 (PSQSQEPSDQRR) are enriched in polar residues.

This sequence belongs to the class-I pyridoxal-phosphate-dependent aminotransferase family.

In terms of biological role, does not catalyze the synthesis of 1-aminocyclopropane-1-carboxylate but is capable of catalyzing the deamination of L-vinylglycine. The chain is 1-aminocyclopropane-1-carboxylate synthase-like protein 1 (ACCS) from Homo sapiens (Human).